Here is a 261-residue protein sequence, read N- to C-terminus: Cytochrome c oxidase subunit 3 (261 aa).

The Mitochondrial matrix segment spans residues 1-15; the sequence is MAHQSHAYHMVKPSP. A helical membrane pass occupies residues 16-34; sequence WPLTGALSALLTTSGLTMW. Residues 35-40 are Mitochondrial intermembrane-facing; the sequence is FHFHST. Residues 41–66 form a helical membrane-spanning segment; the sequence is TLLLTGLLTNALTMYQWWRDVVREST. The Mitochondrial matrix portion of the chain corresponds to 67–72; sequence YQGHHT. The chain crosses the membrane as a helical span at residues 73–105; sequence LPVQKGLRYGMILFITSEVFFFAGFFWAFYHSS. Over 106-128 the chain is Mitochondrial intermembrane; it reads LAPTPQLGGHWPPTGIIPLNPLE. Residues 129 to 152 traverse the membrane as a helical segment; sequence VPLLNTSVLLASGVSITWAHHSLM. Residues 153–155 lie on the Mitochondrial matrix side of the membrane; the sequence is ENN. The chain crosses the membrane as a helical span at residues 156 to 183; the sequence is RTQMIQALLITILLGIYFTLLQASEYIE. Topologically, residues 184–190 are mitochondrial intermembrane; that stretch reads APFTISD. The helical transmembrane segment at 191-223 threads the bilayer; the sequence is GIYGSTFFMATGFHGLHVIIGSTFLTVCLARQL. Residues 224 to 232 are Mitochondrial matrix-facing; it reads LFHFTSKHH. The chain crosses the membrane as a helical span at residues 233-256; the sequence is FGFEAAAWYWHFVDVVWLFLYVSI. At 257–261 the chain is on the mitochondrial intermembrane side; sequence YWWGS.

This sequence belongs to the cytochrome c oxidase subunit 3 family. In terms of assembly, component of the cytochrome c oxidase (complex IV, CIV), a multisubunit enzyme composed of 14 subunits. The complex is composed of a catalytic core of 3 subunits MT-CO1, MT-CO2 and MT-CO3, encoded in the mitochondrial DNA, and 11 supernumerary subunits COX4I, COX5A, COX5B, COX6A, COX6B, COX6C, COX7A, COX7B, COX7C, COX8 and NDUFA4, which are encoded in the nuclear genome. The complex exists as a monomer or a dimer and forms supercomplexes (SCs) in the inner mitochondrial membrane with NADH-ubiquinone oxidoreductase (complex I, CI) and ubiquinol-cytochrome c oxidoreductase (cytochrome b-c1 complex, complex III, CIII), resulting in different assemblies (supercomplex SCI(1)III(2)IV(1) and megacomplex MCI(2)III(2)IV(2)).

It is found in the mitochondrion inner membrane. It catalyses the reaction 4 Fe(II)-[cytochrome c] + O2 + 8 H(+)(in) = 4 Fe(III)-[cytochrome c] + 2 H2O + 4 H(+)(out). Component of the cytochrome c oxidase, the last enzyme in the mitochondrial electron transport chain which drives oxidative phosphorylation. The respiratory chain contains 3 multisubunit complexes succinate dehydrogenase (complex II, CII), ubiquinol-cytochrome c oxidoreductase (cytochrome b-c1 complex, complex III, CIII) and cytochrome c oxidase (complex IV, CIV), that cooperate to transfer electrons derived from NADH and succinate to molecular oxygen, creating an electrochemical gradient over the inner membrane that drives transmembrane transport and the ATP synthase. Cytochrome c oxidase is the component of the respiratory chain that catalyzes the reduction of oxygen to water. Electrons originating from reduced cytochrome c in the intermembrane space (IMS) are transferred via the dinuclear copper A center (CU(A)) of subunit 2 and heme A of subunit 1 to the active site in subunit 1, a binuclear center (BNC) formed by heme A3 and copper B (CU(B)). The BNC reduces molecular oxygen to 2 water molecules using 4 electrons from cytochrome c in the IMS and 4 protons from the mitochondrial matrix. This is Cytochrome c oxidase subunit 3 (MT-CO3) from Pongo abelii (Sumatran orangutan).